Reading from the N-terminus, the 931-residue chain is Ribosome-releasing factor 2, mitochondrial (931 aa).

Positions 63 to 379 (EKTRNIGIIA…AVNNLLPGPS (317 aa)) constitute a tr-type G domain. GTP contacts are provided by residues 72-79 (AHIDAGKT), 162-166 (DTPGH), and 216-219 (NKLD).

This sequence belongs to the TRAFAC class translation factor GTPase superfamily. Classic translation factor GTPase family. EF-G/EF-2 subfamily.

The protein localises to the mitochondrion. Its function is as follows. Mitochondrial GTPase that mediates the disassembly of ribosomes from messenger RNA at the termination of mitochondrial protein biosynthesis. Not involved in the GTP-dependent ribosomal translocation step during translation elongation. This Talaromyces stipitatus (strain ATCC 10500 / CBS 375.48 / QM 6759 / NRRL 1006) (Penicillium stipitatum) protein is Ribosome-releasing factor 2, mitochondrial (mef2).